The following is a 512-amino-acid chain: 2-isopropylmalate synthase (512 aa).

Residues 4 to 266 (IQFFDTTLRD…ETNIVLNQFK (263 aa)) enclose the Pyruvate carboxyltransferase domain. Mn(2+)-binding residues include D13, H201, H203, and N237. Residues 390–512 (ELKHLQVQYV…SKQADFEEVK (123 aa)) are regulatory domain.

This sequence belongs to the alpha-IPM synthase/homocitrate synthase family. LeuA type 1 subfamily. As to quaternary structure, homodimer. The cofactor is Mn(2+).

It localises to the cytoplasm. It catalyses the reaction 3-methyl-2-oxobutanoate + acetyl-CoA + H2O = (2S)-2-isopropylmalate + CoA + H(+). Its pathway is amino-acid biosynthesis; L-leucine biosynthesis; L-leucine from 3-methyl-2-oxobutanoate: step 1/4. In terms of biological role, catalyzes the condensation of the acetyl group of acetyl-CoA with 3-methyl-2-oxobutanoate (2-ketoisovalerate) to form 3-carboxy-3-hydroxy-4-methylpentanoate (2-isopropylmalate). In Listeria innocua serovar 6a (strain ATCC BAA-680 / CLIP 11262), this protein is 2-isopropylmalate synthase.